The sequence spans 486 residues: PTS system N-acetylmuramic acid-specific EIIBC component (486 aa).

The region spanning 1–89 is the PTS EIIB type-1 domain; that stretch reads MAKITQTMIS…NKLIESVING (89 aa). Catalysis depends on C28, which acts as the Phosphocysteine intermediate; for EIIB activity. A PTS EIIC type-1 domain is found at 127–486; sequence SKFATIFTPL…FFGSKDVDLS (360 aa). 10 consecutive transmembrane segments (helical) span residues 129–149, 170–190, 196–216, 230–250, 268–288, 312–332, 347–367, 381–401, 411–431, and 453–473; these read FATI…LLGF, LIAY…ILIG, AFGG…LGYN, FFGY…AAII, MILT…VVIM, AAIL…QGFV, LFPI…ALYF, GAII…VTLP, IGGA…LPVG, and IFAG…VGFL.

It is found in the cell inner membrane. It catalyses the reaction N-acetyl-beta-D-muramate(out) + N(pros)-phospho-L-histidyl-[protein] = N-acetyl-beta-D-muramate 6-phosphate(in) + L-histidyl-[protein]. The phosphoenolpyruvate-dependent sugar phosphotransferase system (sugar PTS), a major carbohydrate active transport system, catalyzes the phosphorylation of incoming sugar substrates concomitantly with their translocation across the cell membrane. This system is involved in N-acetylmuramic acid (MurNAc) transport, yielding cytoplasmic MurNAc-6-P. Is also able to take up anhydro-N-acetylmuramic acid (anhMurNAc), but cannot phosphorylate the carbon 6, probably because of the 1,6-anhydro ring. The chain is PTS system N-acetylmuramic acid-specific EIIBC component (murP) from Vibrio vulnificus (strain CMCP6).